The sequence spans 354 residues: tRNA N6-adenosine threonylcarbamoyltransferase (354 aa).

Residues histidine 111 and histidine 115 each coordinate Fe cation. Residues 134 to 138 (LVSGG), aspartate 167, glycine 180, and asparagine 279 each bind substrate. Aspartate 319 lines the Fe cation pocket.

This sequence belongs to the KAE1 / TsaD family. Fe(2+) serves as cofactor.

The protein resides in the cytoplasm. The catalysed reaction is L-threonylcarbamoyladenylate + adenosine(37) in tRNA = N(6)-L-threonylcarbamoyladenosine(37) in tRNA + AMP + H(+). Required for the formation of a threonylcarbamoyl group on adenosine at position 37 (t(6)A37) in tRNAs that read codons beginning with adenine. Is involved in the transfer of the threonylcarbamoyl moiety of threonylcarbamoyl-AMP (TC-AMP) to the N6 group of A37, together with TsaE and TsaB. TsaD likely plays a direct catalytic role in this reaction. This is tRNA N6-adenosine threonylcarbamoyltransferase from Neisseria meningitidis serogroup B (strain ATCC BAA-335 / MC58).